A 279-amino-acid polypeptide reads, in one-letter code: Large ribosomal subunit protein uL3 (279 aa).

An N5-methylglutamine modification is found at Gln-151.

It belongs to the universal ribosomal protein uL3 family. As to quaternary structure, part of the 50S ribosomal subunit. Forms a cluster with proteins L14 and L19. Methylated by PrmB.

One of the primary rRNA binding proteins, it binds directly near the 3'-end of the 23S rRNA, where it nucleates assembly of the 50S subunit. This is Large ribosomal subunit protein uL3 from Dinoroseobacter shibae (strain DSM 16493 / NCIMB 14021 / DFL 12).